Here is a 179-residue protein sequence, read N- to C-terminus: Ferric nitrobindin-like protein (179 aa).

Residues 17-23 (GRWEGLG) carry the GXWXGXG motif.

It belongs to the nitrobindin family.

This chain is Ferric nitrobindin-like protein, found in Thermobifida fusca (strain YX).